The following is a 306-amino-acid chain: D-alanine--D-alanine ligase (306 aa).

An ATP-grasp domain is found at 107-303 (KHLFKSAGLS…FEQLVVRILE (197 aa)). Position 134–189 (134–189 (IMQQFKKVMVKPSHEGSSIGMAQASTPQELEDALSNAFKFDSQVLVEQWISGREFT)) interacts with ATP. Residues Asp257, Glu270, and Asn272 each coordinate Mg(2+).

It belongs to the D-alanine--D-alanine ligase family. The cofactor is Mg(2+). Mn(2+) is required as a cofactor.

The protein resides in the cytoplasm. It carries out the reaction 2 D-alanine + ATP = D-alanyl-D-alanine + ADP + phosphate + H(+). The protein operates within cell wall biogenesis; peptidoglycan biosynthesis. In terms of biological role, cell wall formation. The protein is D-alanine--D-alanine ligase of Pseudoalteromonas translucida (strain TAC 125).